A 375-amino-acid polypeptide reads, in one-letter code: tRNA/tmRNA (uracil-C(5))-methyltransferase (375 aa).

Q197, Y225, N230, E246, and D306 together coordinate S-adenosyl-L-methionine. The active-site Nucleophile is the C331. Residue E365 is the Proton acceptor of the active site.

Belongs to the class I-like SAM-binding methyltransferase superfamily. RNA M5U methyltransferase family. TrmA subfamily.

The enzyme catalyses uridine(54) in tRNA + S-adenosyl-L-methionine = 5-methyluridine(54) in tRNA + S-adenosyl-L-homocysteine + H(+). The catalysed reaction is uridine(341) in tmRNA + S-adenosyl-L-methionine = 5-methyluridine(341) in tmRNA + S-adenosyl-L-homocysteine + H(+). Functionally, dual-specificity methyltransferase that catalyzes the formation of 5-methyluridine at position 54 (m5U54) in all tRNAs, and that of position 341 (m5U341) in tmRNA (transfer-mRNA). The sequence is that of tRNA/tmRNA (uracil-C(5))-methyltransferase from Aliarcobacter butzleri (strain RM4018) (Arcobacter butzleri).